A 1372-amino-acid polypeptide reads, in one-letter code: DNA-directed RNA polymerase subunit beta' (1372 aa).

Positions 69, 71, 84, and 87 each coordinate Zn(2+). The Mg(2+) site is built by Asp-460, Asp-462, and Asp-464. Zn(2+)-binding residues include Cys-808, Cys-882, Cys-889, and Cys-892.

It belongs to the RNA polymerase beta' chain family. As to quaternary structure, the RNAP catalytic core consists of 2 alpha, 1 beta, 1 beta' and 1 omega subunit. When a sigma factor is associated with the core the holoenzyme is formed, which can initiate transcription. Requires Mg(2+) as cofactor. The cofactor is Zn(2+).

It catalyses the reaction RNA(n) + a ribonucleoside 5'-triphosphate = RNA(n+1) + diphosphate. In terms of biological role, DNA-dependent RNA polymerase catalyzes the transcription of DNA into RNA using the four ribonucleoside triphosphates as substrates. The polypeptide is DNA-directed RNA polymerase subunit beta' (Rickettsia felis (strain ATCC VR-1525 / URRWXCal2) (Rickettsia azadi)).